The primary structure comprises 301 residues: tRNA dimethylallyltransferase (301 aa).

ATP is bound at residue 12-19; sequence GPTASGKT. 14–19 provides a ligand contact to substrate; that stretch reads TASGKT. Residues 37–40 form an interaction with substrate tRNA region; sequence DSLS.

It belongs to the IPP transferase family. In terms of assembly, monomer. Mg(2+) serves as cofactor.

The enzyme catalyses adenosine(37) in tRNA + dimethylallyl diphosphate = N(6)-dimethylallyladenosine(37) in tRNA + diphosphate. Catalyzes the transfer of a dimethylallyl group onto the adenine at position 37 in tRNAs that read codons beginning with uridine, leading to the formation of N6-(dimethylallyl)adenosine (i(6)A). This chain is tRNA dimethylallyltransferase, found in Sulfurovum sp. (strain NBC37-1).